We begin with the raw amino-acid sequence, 938 residues long: Isoleucine--tRNA ligase (938 aa).

The 'HIGH' region signature appears at 58–68 (PYANGNIHLGH). Glu-562 provides a ligand contact to L-isoleucyl-5'-AMP. A 'KMSKS' region motif is present at residues 603 to 607 (KMSKS). Lys-606 contributes to the ATP binding site. Zn(2+)-binding residues include Cys-901, Cys-904, Cys-921, and Cys-924.

Belongs to the class-I aminoacyl-tRNA synthetase family. IleS type 1 subfamily. Monomer. Zn(2+) is required as a cofactor.

It localises to the cytoplasm. The catalysed reaction is tRNA(Ile) + L-isoleucine + ATP = L-isoleucyl-tRNA(Ile) + AMP + diphosphate. Its function is as follows. Catalyzes the attachment of isoleucine to tRNA(Ile). As IleRS can inadvertently accommodate and process structurally similar amino acids such as valine, to avoid such errors it has two additional distinct tRNA(Ile)-dependent editing activities. One activity is designated as 'pretransfer' editing and involves the hydrolysis of activated Val-AMP. The other activity is designated 'posttransfer' editing and involves deacylation of mischarged Val-tRNA(Ile). In Glaesserella parasuis serovar 5 (strain SH0165) (Haemophilus parasuis), this protein is Isoleucine--tRNA ligase.